The chain runs to 358 residues: RuBisCO accumulation factor 1 (358 aa).

The interval 11–194 (VSAAEAAELI…RQAIEKLLTD (184 aa)) is N-terminal alpha-helix. Residues 218 to 344 (ARLIPVAGTF…VVLVLRPKKI (127 aa)) are C-terminal beta-sheet.

It belongs to the RAF family. In terms of assembly, homodimer. Forms an RbcL(8)-Raf1(8) complex. Forms complexes of many stoichiometries with RbcL with and without RbcS. RbcX and Raf1 can bind simultaneously to RbcL. Interacts with both RuBisCO subunits (ccbL, ccbS), GroEL, DnaK and alpha and beta phycocyanin (cpcA, cpcB) in pull-down experiments with tagged protein. C-terminally tagged Raf1 does not interact with either RuBisCO subunit, suggesting its C-terminus is involved in binding.

It localises to the cytoplasm. A major RuBisCO chaperone. Acts after GroEL-GroES chaperonin to fold and/or assemble the large subunit of RuBisCO (ccbL, rbcL). Cooperates with RbcX in RbcL folding, plays the major role in assembly of dimers into RbcL(8)-Raf1(8) intermediate complexes. RbcS replaces Raf1, leading to holoenzyme formation. Its function is as follows. Required for optimal reconstitution of RbcL(8) upon expression in E.coli. Has been suggested to be involved in RuBisCO recycling and homeostasis rather than assembly. This Synechocystis sp. (strain ATCC 27184 / PCC 6803 / Kazusa) protein is RuBisCO accumulation factor 1.